We begin with the raw amino-acid sequence, 415 residues long: Peptide chain release factor subunit 1 (415 aa).

Belongs to the eukaryotic release factor 1 family. Heterodimer of two subunits, one of which binds GTP.

It is found in the cytoplasm. Directs the termination of nascent peptide synthesis (translation) in response to the termination codons UAA, UAG and UGA. The polypeptide is Peptide chain release factor subunit 1 (Thermococcus kodakarensis (strain ATCC BAA-918 / JCM 12380 / KOD1) (Pyrococcus kodakaraensis (strain KOD1))).